Reading from the N-terminus, the 737-residue chain is Relaxin receptor 2 (737 aa).

Residues M1 to G399 are Extracellular-facing. One can recognise an LDL-receptor class A domain in the interval L27–G64. 3 disulfide bridges follow: C28/C41, C35/C54, and C48/C63. Residue N37 is glycosylated (N-linked (GlcNAc...) asparagine). N-linked (GlcNAc...) asparagine glycosylation is present at N121. LRR repeat units lie at residues N121 to R142, E145 to G166, N169 to D190, Q193 to G214, S217 to Q238, Q241 to T262, S265 to S286, N289 to D310, L313 to S334, and Q337 to P358. N-linked (GlcNAc...) asparagine glycosylation is present at N257. Residues N318, N350, and N361 are each glycosylated (N-linked (GlcNAc...) asparagine). The chain crosses the membrane as a helical span at residues I400–I420. The Cytoplasmic portion of the chain corresponds to A421–K438. The chain crosses the membrane as a helical span at residues I439–I459. At K460–C478 the chain is on the extracellular side. A disulfide bridge links C478 with C556. A helical membrane pass occupies residues R479 to L501. At E502–Q520 the chain is on the cytoplasmic side. A helical transmembrane segment spans residues T521–T541. The Extracellular portion of the chain corresponds to R542–G575. Residues I576–F596 form a helical membrane-spanning segment. Residues C597 to R622 are Cytoplasmic-facing. A helical transmembrane segment spans residues F623–L643. Residues S644–T653 lie on the Extracellular side of the membrane. Residues I654–Y674 form a helical membrane-spanning segment. The Cytoplasmic portion of the chain corresponds to T675–P737.

Belongs to the G-protein coupled receptor 1 family. In terms of tissue distribution, expressed in embryonic and adult gonads of males and females, as well in male gubernarculum. Expressed also in brain. Not detected in kidney, spleen and heart.

The protein resides in the cell membrane. Functionally, receptor for relaxin. The activity of this receptor is mediated by G proteins leading to stimulation of adenylate cyclase and an increase of cAMP. May also be a receptor for Leydig insulin-like peptide (INSL3). The polypeptide is Relaxin receptor 2 (Rxfp2) (Mus musculus (Mouse)).